The primary structure comprises 392 residues: 5-azacytidine-induced protein 2 (392 aa).

The homodimerization stretch occupies residues 1-197 (MDALVEDDIC…IELQKAKQTD (197 aa)). 3 coiled-coil regions span residues 40–76 (ALVT…LIAR), 102–135 (DRDN…EVEL), and 166–196 (DLKI…AKQT). The interaction with TBK1 and IKBKE stretch occupies residues 216-257 (SDNMQHAYWELKREMSNLHLVTQVQAELLRKLKTSTAIKKAC). A phosphoserine mark is found at serine 318 and serine 353. Residues 345-365 (EDNSWVFPSPPKSSETAFGET) form a disordered region.

As to quaternary structure, homodimer. Interacts with IKBKE, TBK1 and TICAM1. Interacts with TAX1BP1. Interacts with CALCOCO2. Ubiquitinated via 'Lys-48'-linked polyubiquitination by TRIM38, leading to its degradation.

It localises to the cytoplasm. Adapter protein which binds TBK1 and IKBKE playing a role in antiviral innate immunity. Activates serine/threonine-protein kinase TBK1 and facilitates its oligomerization. Enhances the phosphorylation of NF-kappa-B p65 subunit RELA by TBK1. Promotes TBK1-induced as well as TNF-alpha or PMA-induced activation of NF-kappa-B. Participates in IFNB promoter activation via TICAM1. This is 5-azacytidine-induced protein 2 (AZI2) from Pongo abelii (Sumatran orangutan).